The primary structure comprises 991 residues: uncharacterized protein (991 aa).

The first 17 residues, 1-17 (MLWPAALVAMFALAARA), serve as a signal peptide directing secretion. Disordered regions lie at residues 332 to 352 (DPLP…GETT), 392 to 425 (TTED…TTEG), 469 to 511 (EDST…EDTT), 542 to 569 (DTEA…TTPV), 587 to 641 (PAPT…NSLS), and 658 to 734 (ASSG…PPRI). Residues 400–413 (TSTPTVTTVIDPTS) show a composition bias toward low complexity. Over residues 414 to 425 (GAVTTESRTTEG) the composition is skewed to polar residues. Over residues 472-493 (TTTARAAEYPTPTTTTVEPRPA) the composition is skewed to low complexity. Over residues 542–554 (DTEAAQSATSISD) the composition is skewed to polar residues. Low complexity-rich tracts occupy residues 556–569 (VTPE…TTPV) and 598–615 (ASTT…SHTP). Polar residues-rich tracts occupy residues 617 to 628 (PQESTSTPSRAP) and 658 to 667 (ASSGPGASTG). Over residues 668–682 (ATTAPISPPWSASPA) the composition is skewed to low complexity. A compositionally biased stretch (polar residues) spans 686 to 710 (VTTSAARTLEPSSTRKAVAAESTTA).

This is an uncharacterized protein from Psittacid herpesvirus 1 (isolate Amazon parrot/-/97-0001/1997) (PsHV-1).